The sequence spans 464 residues: Argininosuccinate lyase (464 aa).

This sequence belongs to the lyase 1 family. Argininosuccinate lyase subfamily.

It localises to the cytoplasm. The enzyme catalyses 2-(N(omega)-L-arginino)succinate = fumarate + L-arginine. It participates in amino-acid biosynthesis; L-arginine biosynthesis; L-arginine from L-ornithine and carbamoyl phosphate: step 3/3. In Streptococcus suis (strain 98HAH33), this protein is Argininosuccinate lyase.